Consider the following 322-residue polypeptide: MNQPFEVKLEEHWLRDTYVDLLLEYAQKDDRIVALDADLMAASSVKRFSQQMPGRAIDVGVAEANMIGVAAGLAAMGKIPFTHSFTAFASRRVCDQVTLSVAYAGLNVKMVGSDPGITAELNGGTHMSMEDVSIMRNIPGMTVYEPVDSAQLRAAFPQILAHDGPVYIRLLRRPAVRIDSENDEFTLGKASLLREGGDVTILATGIMVAEALLAAEELAGQGIGAEVLNVHTVKPFDEEAVLRSAMKTGAVVTAENASVIGGLGSAAAECLGENCPVPLRRVGVRDCFGEVGLTDYLKEKFGLTAKEIVRAAHEVTERKNFR.

This sequence belongs to the transketolase family. As to quaternary structure, forms a complex with SqwG. The cofactor is thiamine diphosphate.

It carries out the reaction 6-deoxy-6-sulfo-D-fructose + D-glyceraldehyde 3-phosphate = 4-deoxy-4-sulfo-D-erythrose + D-xylulose 5-phosphate. The enzyme catalyses 4-deoxy-4-sulfo-D-erythrulose + D-glyceraldehyde 3-phosphate = sulfoacetaldehyde + D-xylulose 5-phosphate. Functionally, part of the sulfo-TK pathway, a D-sulfoquinovose degradation pathway that produces 2-hydroxyethane-1-sulfonate (isethionate). Catalyzes two steps of the pathway: the formation of 4-deoxy-4-sulfoerythrose (SE) and xylulose 5-phosphate from 6-deoxy-6-sulfo-D-fructose (SF) and glyceraldehyde 3-phosphate, and the formation of sulfoacetaldehyde (SA) and xylulose 5-phosphate from 4-deoxy-4-sulfo-D-erythrulose (SEu) and glyceraldehyde 3-phosphate. The protein is 6-deoxy-6-sulfo-D-fructose transketolase subunit SqwH of Clostridium sp. (strain MSTE9).